Consider the following 284-residue polypeptide: Isopentenyl-diphosphate Delta-isomerase II, chloroplastic (284 aa).

A chloroplast-targeting transit peptide spans M1–R45. A46 carries the post-translational modification N-acetylalanine. Position 88 (K88) interacts with substrate. Mg(2+) contacts are provided by H92 and H104. The Nudix hydrolase domain maps to L102–L254. Substrate is bound by residues R123 and K127. Residue C139 is part of the active site. Residue S140 participates in substrate binding. A Nudix box motif is present at residues S140–G170. 2 residues coordinate Mg(2+): E199 and E201. E201 is a catalytic residue.

The protein belongs to the IPP isomerase type 1 family. It depends on Mg(2+) as a cofactor.

It localises to the plastid. The protein resides in the chloroplast. It catalyses the reaction isopentenyl diphosphate = dimethylallyl diphosphate. It functions in the pathway isoprenoid biosynthesis; dimethylallyl diphosphate biosynthesis; dimethylallyl diphosphate from isopentenyl diphosphate: step 1/1. Its pathway is porphyrin-containing compound metabolism; chlorophyll biosynthesis. In terms of biological role, catalyzes the 1,3-allylic rearrangement of the homoallylic substrate isopentenyl (IPP) to its highly electrophilic allylic isomer, dimethylallyl diphosphate (DMAPP). The protein is Isopentenyl-diphosphate Delta-isomerase II, chloroplastic (IPP2) of Arabidopsis thaliana (Mouse-ear cress).